Reading from the N-terminus, the 688-residue chain is Potassium-transporting ATPase ATP-binding subunit (688 aa).

A run of 4 helical transmembrane segments spans residues 34-54 (PVMF…LAIL), 62-82 (AMFT…ANMA), 219-239 (VALT…TATL), and 260-280 (VLVA…LSAI). Residue Asp313 is the 4-aspartylphosphate intermediate of the active site. ATP-binding positions include Asp350, Glu354, 383-390 (FSAQTRMS), and Lys401. Positions 524 and 528 each coordinate Mg(2+). 3 helical membrane-spanning segments follow: residues 594-614 (FAII…LNIM), 622-642 (AILS…PLAL), and 662-682 (IYGL…DLLL).

This sequence belongs to the cation transport ATPase (P-type) (TC 3.A.3) family. Type IA subfamily. The system is composed of three essential subunits: KdpA, KdpB and KdpC.

It localises to the cell inner membrane. It catalyses the reaction K(+)(out) + ATP + H2O = K(+)(in) + ADP + phosphate + H(+). Functionally, part of the high-affinity ATP-driven potassium transport (or Kdp) system, which catalyzes the hydrolysis of ATP coupled with the electrogenic transport of potassium into the cytoplasm. This subunit is responsible for energy coupling to the transport system and for the release of the potassium ions to the cytoplasm. This chain is Potassium-transporting ATPase ATP-binding subunit, found in Yersinia pseudotuberculosis serotype I (strain IP32953).